A 518-amino-acid polypeptide reads, in one-letter code: Glucan 1,4-alpha-maltohexaosidase (518 aa).

The N-terminal stretch at 1–33 (MKMRTGKKGFLSILLAFLLVITSIPFTLVDVEA) is a signal peptide. Asn139, Asp196, Ala219, Asp221, Asp232, Asp238, Asp240, and Asp242 together coordinate Ca(2+). Residue Asp196 participates in Na(+) binding. Na(+)-binding residues include Asp221, Asp232, and Asp238. The active-site Nucleophile is the Asp269. His273 is a Ca(2+) binding site. Residue Glu299 is the Proton donor of the active site.

The protein belongs to the glycosyl hydrolase 13 family. Requires Ca(2+) as cofactor. Na(+) serves as cofactor.

It localises to the secreted. It catalyses the reaction Hydrolysis of (1-&gt;4)-alpha-D-glucosidic linkages in amylaceous polysaccharides, to remove successive maltohexaose residues from the non-reducing chain ends.. It functions in the pathway glycan degradation; starch degradation. This chain is Glucan 1,4-alpha-maltohexaosidase, found in Bacillus sp. (strain 707).